Reading from the N-terminus, the 254-residue chain is 3-dehydroquinate dehydratase (254 aa).

3-dehydroquinate-binding positions include 47–49 (EFR) and R83. Residue H144 is the Proton donor/acceptor of the active site. Residue K171 is the Schiff-base intermediate with substrate of the active site. 3-dehydroquinate-binding residues include R213, S232, and Q236.

Belongs to the type-I 3-dehydroquinase family. Homodimer.

It carries out the reaction 3-dehydroquinate = 3-dehydroshikimate + H2O. It participates in metabolic intermediate biosynthesis; chorismate biosynthesis; chorismate from D-erythrose 4-phosphate and phosphoenolpyruvate: step 3/7. In terms of biological role, involved in the third step of the chorismate pathway, which leads to the biosynthesis of aromatic amino acids. Catalyzes the cis-dehydration of 3-dehydroquinate (DHQ) and introduces the first double bond of the aromatic ring to yield 3-dehydroshikimate. The sequence is that of 3-dehydroquinate dehydratase from Neisseria meningitidis serogroup B (strain ATCC BAA-335 / MC58).